The following is a 150-amino-acid chain: UPF0540 protein At1g62080 (150 aa).

The first 21 residues, 1 to 21 (MNATKFLVLLVIGVLCAIVTA), serve as a signal peptide directing secretion. Over residues 119 to 135 (AAAARAKGKVASASRVK) the composition is skewed to low complexity. The tract at residues 119 to 150 (AAAARAKGKVASASRVKGSSEKKKKDRKGKKD) is disordered.

The protein belongs to the UPF0540 family.

The protein is UPF0540 protein At1g62080 of Arabidopsis thaliana (Mouse-ear cress).